A 707-amino-acid chain; its full sequence is MVLKSTSANDVSVYQVSGTNVSRSLPDWIAKKRKRQLKNDLEYQNRVELIQDFEFSEASNKIKVSRDGQYCMATGTYKPQIHVYDFANLSLKFDRHTDAENVDFTILSDDWTKSVHLQNDRSIQFQNKGGLHYTTRIPKFGRSLVYNKVNCDLYVGASGNELYRLNLEKGRFLNPFKLDTEGVNHVSINEVNGLLAAGTETNVVEFWDPRSRSRVSKLYLENNIDNRPFQVTTTSFRNDGLTFACGTSNGYSYIYDLRTSEPSIIKDQGYGFDIKKIIWLDNVGTENKIVTCDKRIAKIWDRLDGKAYASMEPSVDINDIEHVPGTGMFFTANESIPMHTYYIPSLGPSPRWCSFLDSITEELEEKPSDTVYSNYRFITRDDVKKLNLTHLVGSRVLRAYMHGFFINTELYDKVSLIANPDAYKDEREREIRRRIEKERESRIRSSGAVQKPKIKVNKTLVDKLSQKRGDKVAGKVLTDDRFKEMFEDEEFQVDEDDYDFKQLNPVKSIKETEEGAAKRIRALTAAEESDEERIAMKDGRGHYDYEDEESDEEESDDETNQKSNKEELSEKDLRKMEKQKALIERRKKEKEQSERFMNEMKAGTSTSTQRDESAHVTFGEQVGELLEVENGKKSNESILRRNQRGEAELTFIPQRKSKKDGNYKSRRHDNSSDEEGIDENGNKKDNGRSKPRFENRRRASKNAFRGM.

WD repeat units lie at residues 54 to 94 (EFSE…LKFD), 178 to 217 (LDTE…RVSK), 226 to 265 (NRPF…PSII), 269 to 310 (GYGF…AYAS), and 312 to 351 (EPSV…PSPR). Residues 523–707 (LTAAEESDEE…RASKNAFRGM (185 aa)) form a disordered region. Ser-529 bears the Phosphoserine mark. Residues 532-544 (ERIAMKDGRGHYD) show a composition bias toward basic and acidic residues. Over residues 545–558 (YEDEESDEEESDDE) the composition is skewed to acidic residues. 2 positions are modified to phosphoserine: Ser-550 and Ser-555. Composition is skewed to basic and acidic residues over residues 559–598 (TNQK…RFMN), 629–647 (ENGK…RGEA), 659–671 (KDGN…HDNS), and 680–697 (NGNK…ENRR).

This sequence belongs to the WD repeat NOL10/ENP2 family. Component of the 90S pre-ribosomes.

The protein localises to the nucleus. It localises to the nucleolus. In terms of biological role, may be involved in rRNA-processing and ribosome biosynthesis. This chain is Ribosome biogenesis protein ENP2 (ENP2), found in Saccharomyces cerevisiae (strain ATCC 204508 / S288c) (Baker's yeast).